Here is a 661-residue protein sequence, read N- to C-terminus: Tegument protein UL46 homolog (661 aa).

Residues 1–31 form a disordered region; the sequence is MFSRFARSFSSDDRTRKSYDGSYQSFNAGER. The span at 10-19 shows a compositional bias: basic and acidic residues; sequence SSDDRTRKSY. 2 consecutive transmembrane segments (helical) span residues 299–319 and 339–359; these read AGTGVAFILAATTASALTALL and AAIVAAVELITLLHHHFQYLI.

The protein belongs to the herpesviridae HHV-1 VP11/12 protein family. In terms of processing, phosphorylated by host LCK. The phosphorylation seems to be lymphocyte-specific.

It is found in the virion tegument. The protein resides in the host cytoplasm. The protein localises to the host membrane. In terms of biological role, plays a role in the activation of the host PI3K/AKT pathway to promote cell survival. Interacts with and activates PI3KR1 in order to phosphorylate host AKT on its activating residues. Activates the host AP-1 pathway by triggering phosphorylation of host ERK1/2. Participates in host BIM and BAD phosphorylation, leading to apoptosis inhibition. The polypeptide is Tegument protein UL46 homolog (Varicella-zoster virus (strain Oka vaccine) (HHV-3)).